The sequence spans 244 residues: UPF0280 protein MJ1526 (244 aa).

The protein belongs to the UPF0280 family.

The polypeptide is UPF0280 protein MJ1526 (Methanocaldococcus jannaschii (strain ATCC 43067 / DSM 2661 / JAL-1 / JCM 10045 / NBRC 100440) (Methanococcus jannaschii)).